Reading from the N-terminus, the 833-residue chain is Heat shock transcription factor (833 aa).

Met-1 is subject to N-acetylmethionine. The segment covering 1 to 16 has biased composition (polar residues); that stretch reads MNNAANTGTTNESNVS. Disordered regions lie at residues 1-31 and 62-92; these read MNNAANTGTTNESNVSDAPRIEPLPSLNDDD and NPSLDPQSAASPVPSSSFFHDSRKPSTSTHL. Low complexity predominate over residues 69–80; the sequence is SAASPVPSSSFF. At Thr-97 the chain carries Phosphothreonine. A compositionally biased stretch (polar residues) spans 150 to 161; it reads PSSGTTNAQPRQ. 2 disordered regions span residues 150 to 170 and 277 to 309; these read PSSGTTNAQPRQTTRRYQSHK and GSSNNHNSPSGNGNPANGSNIPLDNAAGSNNSN. A DNA-binding region spans residues 170-259; the sequence is KSRPAFVNKL…SDDKWQFENE (90 aa). Residues 260 to 280 form a flexible linker region; the sequence is NFIRGREDLLEKIIRQKGSSN. A compositionally biased stretch (low complexity) spans 277–296; it reads GSSNNHNSPSGNGNPANGSN. The interval 350–403 is involved in trimerization; that stretch reads ELEQIKYNQIAISKDLLRINKDNELLWQENMMARERHRTQQQALEKMFRFLTSI. The span at 447–457 shows a compositional bias: basic and acidic residues; the sequence is SNDSFINDDRN. Residues 447–493 form a disordered region; that stretch reads SNDSFINDDRNSFTNATTNARNNMSPNNDDNSIDTASTNTTNRKKNI. Phosphoserine occurs at positions 450, 458, 471, 478, and 528. A compositionally biased stretch (polar residues) spans 458-487; sequence SFTNATTNARNNMSPNNDDNSIDTASTNTT. Residues 542–554 are compositionally biased toward polar residues; sequence RANSSTSSENPSL. Disordered regions lie at residues 542–626, 657–765, and 778–799; these read RANS…HNES, GYPN…RVSP, and SDNLPSFNDHSYSTQADTAPEN. A compositionally biased stretch (acidic residues) spans 571–580; the sequence is PFDDEEEEET. Residues 588–600 show a composition bias toward polar residues; it reads RDPNNQTSENTFD. A compositionally biased stretch (basic and acidic residues) spans 610–626; the sequence is DDLKKDSHTNDNKHNES. The segment covering 660–675 has biased composition (low complexity); it reads NKSFNNKTSSTNTNSN. The span at 676–687 shows a compositional bias: polar residues; it reads MESAVNVNSPGF. The segment covering 697–713 has biased composition (low complexity); the sequence is SNSPNSVHSVPSNGSGS. Polar residues-rich tracts occupy residues 727–739, 752–763, and 778–794; these read ASTSVNQGENGSG, NDNNTSEGSTRV, and SDNLPSFNDHSYSTQAD.

The protein belongs to the HSF family. As to quaternary structure, homotrimer. Homotrimerization increases the affinity of HSF1 to DNA. Post-translationally, exhibits temperature-dependent phosphorylation that activates the transcriptional capacity.

The protein resides in the nucleus. Its function is as follows. DNA-binding transcription factor that specifically binds heat shock promoter elements (HSE) and activates transcription. This is Heat shock transcription factor from Saccharomyces cerevisiae (strain ATCC 204508 / S288c) (Baker's yeast).